Here is a 153-residue protein sequence, read N- to C-terminus: Large ribosomal subunit protein uL22 (153 aa).

It belongs to the universal ribosomal protein uL22 family. Part of the 50S ribosomal subunit.

Functionally, this protein binds specifically to 23S rRNA. It makes multiple contacts with different domains of the 23S rRNA in the assembled 50S subunit and ribosome. The globular domain of the protein is located near the polypeptide exit tunnel on the outside of the subunit, while an extended beta-hairpin is found that lines the wall of the exit tunnel in the center of the 70S ribosome. The sequence is that of Large ribosomal subunit protein uL22 from Methanococcus maripaludis (strain C5 / ATCC BAA-1333).